Here is a 309-residue protein sequence, read N- to C-terminus: uncharacterized protein (309 aa).

Residues 1–11 are compositionally biased toward basic residues; sequence MPGNSRRRGAV. The tract at residues 1 to 69 is disordered; that stretch reads MPGNSRRRGA…PVKRTDETET (69 aa). S-adenosyl-L-methionine-binding residues include Gly-261, Ile-281, and Leu-290.

The protein belongs to the class IV-like SAM-binding methyltransferase superfamily. RNA methyltransferase TrmH family.

This is an uncharacterized protein from Mycobacterium leprae (strain TN).